The following is a 507-amino-acid chain: Histone-lysine N-methyltransferase set-18 (507 aa).

The Zn(2+) site is built by Cys49, Cys52, Cys65, Cys68, Cys74, Cys78, His86, and Cys90. The MYND-type zinc finger occupies 49–90 (CANCLRGPAPGEKLLRCGGCNFSMYCSKECQATAWLVHKPEC).

This sequence belongs to the class V-like SAM-binding methyltransferase superfamily. Histone-lysine methyltransferase family. In terms of tissue distribution, expressed in pharyngeal and body wall muscles.

The catalysed reaction is L-lysyl(36)-[histone H3] + 2 S-adenosyl-L-methionine = N(6),N(6)-dimethyl-L-lysyl(36)-[histone H3] + 2 S-adenosyl-L-homocysteine + 2 H(+). Its function is as follows. Histone methyltransferase. Specifically methylates 'Lys-36' of histone H3, inducing di-methylation. Plays a role in modulating lifespan and oxidative stress resistance, in a manner dependent upon daf-16/Forkhead box protein O and the Insulin/IGF-1-like signaling (IIS) mediated pathway. Represses transcription of daf-16 isoform a, perhaps by methylating histone H3 at the daf-16 promoter, which in turn leads to recruitment of histone deacetylases and thus modulation of expression. This chain is Histone-lysine N-methyltransferase set-18, found in Caenorhabditis elegans.